We begin with the raw amino-acid sequence, 327 residues long: Spermidine/putrescine import ATP-binding protein PotA (327 aa).

Residues 5-235 form the ABC transporter domain; the sequence is IKVEAVEKHF…PKTLFVATFI (231 aa). 37 to 44 serves as a coordination point for ATP; it reads GPSGCGKT.

Belongs to the ABC transporter superfamily. Spermidine/putrescine importer (TC 3.A.1.11.1) family. The complex is composed of two ATP-binding proteins (PotA), two transmembrane proteins (PotB and PotC) and a solute-binding protein (PotD).

Its subcellular location is the cell membrane. It catalyses the reaction ATP + H2O + polyamine-[polyamine-binding protein]Side 1 = ADP + phosphate + polyamineSide 2 + [polyamine-binding protein]Side 1.. Functionally, part of the ABC transporter complex PotABCD involved in spermidine/putrescine import. Responsible for energy coupling to the transport system. The chain is Spermidine/putrescine import ATP-binding protein PotA from Bacillus thuringiensis subsp. konkukian (strain 97-27).